We begin with the raw amino-acid sequence, 376 residues long: MKHNRPNGTGKAVSGFKQIIRRLLLLLNKKRRKQLVIILKRITQVYGINLVFYVKKWKLKKLQGENIQINDIMPWLRESTILVLLNILYPTLMKFPFLKNHYIHWSSIVGISLMLTKGEVPSWIIAHFLVEAIASKLKIAKLTQWLKKKNFSQGTLIKFQQILVCLAIIVLFAKLDRSSLPFRVLFDHRPFLIDFFTINAIFTVLAVYHRTLKFFFTSGTKSNKNVGGHEVRNFSQYLGVKNHNDWPISSSNLKHVMDRLNEIHEVTIDDNYANINEKIINSYFTKGFFPSLKWTILRQCIEYLFVTKRRRLMGNKLRCIVMLLTFTFVDPTSKMKISPFFAKFFAKSLVNVYLKKYWHCNFGKYILFFLFQLSIM.

The next 2 helical transmembrane spans lie at 153–173 (QGTLIKFQQILVCLAIIVLFA) and 188–208 (HRPFLIDFFTINAIFTVLAVY).

It is found in the membrane. This is an uncharacterized protein from Saccharomyces cerevisiae (strain ATCC 204508 / S288c) (Baker's yeast).